The following is a 259-amino-acid chain: tRNA-cytidine(32) 2-sulfurtransferase (259 aa).

The PP-loop motif motif lies at 37–42 (SGGKDS). Residues Cys112, Cys115, and Cys202 each contribute to the [4Fe-4S] cluster site.

It belongs to the TtcA family. As to quaternary structure, homodimer. The cofactor is Mg(2+). [4Fe-4S] cluster serves as cofactor.

It localises to the cytoplasm. The catalysed reaction is cytidine(32) in tRNA + S-sulfanyl-L-cysteinyl-[cysteine desulfurase] + AH2 + ATP = 2-thiocytidine(32) in tRNA + L-cysteinyl-[cysteine desulfurase] + A + AMP + diphosphate + H(+). It participates in tRNA modification. In terms of biological role, catalyzes the ATP-dependent 2-thiolation of cytidine in position 32 of tRNA, to form 2-thiocytidine (s(2)C32). The sulfur atoms are provided by the cysteine/cysteine desulfurase (IscS) system. The polypeptide is tRNA-cytidine(32) 2-sulfurtransferase (Syntrophotalea carbinolica (strain DSM 2380 / NBRC 103641 / GraBd1) (Pelobacter carbinolicus)).